The sequence spans 206 residues: Glycerol-3-phosphate acyltransferase (206 aa).

The next 5 membrane-spanning stretches (helical) occupy residues 3 to 23 (LSLIFILAYLIGSFPSGVIIG), 47 to 67 (VLGPIAGTAVLFLDILKGTLA), 79 to 99 (HSLVLVVGLAAVIGHAYSIFL), 119 to 139 (PLFFVIASTIFISVILITSMV), and 152 to 172 (ILSFYTHDWLLGTIATLVLIF).

It belongs to the PlsY family. As to quaternary structure, probably interacts with PlsX.

Its subcellular location is the cell membrane. The enzyme catalyses an acyl phosphate + sn-glycerol 3-phosphate = a 1-acyl-sn-glycero-3-phosphate + phosphate. The protein operates within lipid metabolism; phospholipid metabolism. In terms of biological role, catalyzes the transfer of an acyl group from acyl-phosphate (acyl-PO(4)) to glycerol-3-phosphate (G3P) to form lysophosphatidic acid (LPA). This enzyme utilizes acyl-phosphate as fatty acyl donor, but not acyl-CoA or acyl-ACP. The chain is Glycerol-3-phosphate acyltransferase from Latilactobacillus sakei subsp. sakei (strain 23K) (Lactobacillus sakei subsp. sakei).